Consider the following 49-residue polypeptide: Osteocalcin (49 aa).

Residues 1-47 form the Gla domain; it reads YLDHGLGAPAPYPDPLEPRREVCELNPDCDELADHIGFQEAYRRFYG. Pro9 is modified (hydroxyproline). Ca(2+)-binding residues include Glu17, Glu21, Glu24, and Asp30. 3 positions are modified to 4-carboxyglutamate: Glu17, Glu21, and Glu24. An intrachain disulfide couples Cys23 to Cys29.

The protein belongs to the osteocalcin/matrix Gla protein family. Gamma-carboxyglutamate residues are formed by vitamin K dependent carboxylation by GGCX. These residues are essential for the binding of calcium. Decarboxylation promotes the hormone activity.

The protein localises to the secreted. The carboxylated form is one of the main organic components of the bone matrix, which constitutes 1-2% of the total bone protein. It acts as a negative regulator of bone formation and is required to limit bone formation without impairing bone resorption or mineralization. The carboxylated form binds strongly to apatite and calcium. Functionally, the uncarboxylated form acts as a hormone secreted by osteoblasts, which regulates different cellular processes, such as energy metabolism, male fertility and brain development. Regulates of energy metabolism by acting as a hormone favoring pancreatic beta-cell proliferation, insulin secretion and sensitivity and energy expenditure. Uncarboxylated osteocalcin hormone also promotes testosterone production in the testes: acts as a ligand for G protein-coupled receptor GPRC6A at the surface of Leydig cells, initiating a signaling response that promotes the expression of enzymes required for testosterone synthesis in a CREB-dependent manner. Also acts as a regulator of brain development: osteocalcin hormone crosses the blood-brain barrier and acts as a ligand for GPR158 on neurons, initiating a signaling response that prevents neuronal apoptosis in the hippocampus, favors the synthesis of all monoamine neurotransmitters and inhibits that of gamma-aminobutyric acid (GABA). Osteocalcin also crosses the placenta during pregnancy and maternal osteocalcin is required for fetal brain development. This chain is Osteocalcin (BGLAP), found in Sus scrofa (Pig).